Here is a 328-residue protein sequence, read N- to C-terminus: GTP 3',8-cyclase (328 aa).

A Radical SAM core domain is found at Gly-9–Ala-229. GTP is bound at residue Arg-18. Residues Cys-25 and Cys-29 each contribute to the [4Fe-4S] cluster site. Tyr-31 contacts S-adenosyl-L-methionine. Cys-32 is a binding site for [4Fe-4S] cluster. Arg-60 contacts GTP. Residue Gly-64 participates in S-adenosyl-L-methionine binding. GTP is bound at residue Thr-94. Ser-118 lines the S-adenosyl-L-methionine pocket. Lys-154 is a GTP binding site. Met-188 is a binding site for S-adenosyl-L-methionine. Positions 252 and 255 each coordinate [4Fe-4S] cluster. Arg-257–Arg-259 contributes to the GTP binding site. Cys-269 contributes to the [4Fe-4S] cluster binding site.

This sequence belongs to the radical SAM superfamily. MoaA family. Monomer and homodimer. The cofactor is [4Fe-4S] cluster.

The enzyme catalyses GTP + AH2 + S-adenosyl-L-methionine = (8S)-3',8-cyclo-7,8-dihydroguanosine 5'-triphosphate + 5'-deoxyadenosine + L-methionine + A + H(+). It functions in the pathway cofactor biosynthesis; molybdopterin biosynthesis. Functionally, catalyzes the cyclization of GTP to (8S)-3',8-cyclo-7,8-dihydroguanosine 5'-triphosphate. In Rhodobacter capsulatus (Rhodopseudomonas capsulata), this protein is GTP 3',8-cyclase.